The following is a 614-amino-acid chain: MEERAAVEYWGDYKVIAELGHGLWSRDVLAEHRFIKKRYILKILPSELSSSENFMRVFQEVIVQLAAIRHASLVAIENVSREGDRYFVVTEENGGTISLAQYLSGRKLSEEEVVHLIQQLCDALELVHSIGLAHGQIHLHSVHVSFFNGIANIYLPEVGFASLLRERMFSTIMQSGSARESITRIRDLLMFEAPEEQEVFGREADVYSVGVLAYYLLVGSFPWGSFPKPSLCMPDSWYDWDGFILSCLQQQREARPKCLREALRRKTSGEQLQVTLDSCREPLREMEIEDTPTELGPPSALIREGERLCEVKEEQHAFVLVEAKSIDEAMVTTVDSEEELESSEGYANPLQSLLAREPVVSRYVEVEREEIKPQPLLTEMIFIEGGEFSRGSGDGQRDELPVHNITLPGFFLDIHPVTNEQFVRFLECVGSEQDEHYNELIRLKDSRIQRRSGRLIIEPGYAKHPVVGVTWYGASSYACWIGKRLPSEAEWEVAASGGKLGLRYPTGEEIDKSKANFFSSDTTPVMSYPSSILGLYDMAGNVYEWCQDWYSYDFYESSALEPDAPLGPPQGVYRVLRGGCWKSLKDDLRCAHRHRNNPGAINSTYGFRCAKDVK.

Positions 13–276 constitute a Protein kinase domain; it reads YKVIAELGHG…TSGEQLQVTL (264 aa). ATP-binding positions include 19-27 and Lys42; that span reads LGHGLWSRD.

The protein belongs to the protein kinase superfamily. Ser/Thr protein kinase family. As to quaternary structure, interacts with PknD, interacts with and phosphorylates IncG. In terms of processing, autophosphorylates on serine and threonine residues. Present in elementary bodies 40 hours post-infection as 2 proteins of approximately 70 and 65 kDa; the smaller one may be due to differential phosphorylation or degradation.

It catalyses the reaction L-seryl-[protein] + ATP = O-phospho-L-seryl-[protein] + ADP + H(+). The catalysed reaction is L-threonyl-[protein] + ATP = O-phospho-L-threonyl-[protein] + ADP + H(+). Functionally, together with the serine/threonine kinase PknD, may play a role in specific interactions with host proteins during host intracellular growth. Autophosphorylates and phosphorylates IncG, an inclusion-membrane protein required for the modification of the nascent chlamydial inclusion. This Chlamydia trachomatis serovar L2 (strain ATCC VR-902B / DSM 19102 / 434/Bu) protein is Serine/threonine-protein kinase Pkn1 (pkn1).